Here is a 370-residue protein sequence, read N- to C-terminus: Phosphate acyltransferase (370 aa).

It belongs to the PlsX family. As to quaternary structure, homodimer. Probably interacts with PlsY.

Its subcellular location is the cytoplasm. It carries out the reaction a fatty acyl-[ACP] + phosphate = an acyl phosphate + holo-[ACP]. The protein operates within lipid metabolism; phospholipid metabolism. Catalyzes the reversible formation of acyl-phosphate (acyl-PO(4)) from acyl-[acyl-carrier-protein] (acyl-ACP). This enzyme utilizes acyl-ACP as fatty acyl donor, but not acyl-CoA. The sequence is that of Phosphate acyltransferase from Polaromonas naphthalenivorans (strain CJ2).